The primary structure comprises 264 residues: ATP synthase subunit a (264 aa).

The next 6 membrane-spanning stretches (helical) occupy residues Thr29–Phe49, Asn87–Met107, Asp134–Ile154, Ile177–Leu197, Leu208–Val228, and Leu235–Val255.

The protein belongs to the ATPase A chain family. F-type ATPases have 2 components, CF(1) - the catalytic core - and CF(0) - the membrane proton channel. CF(1) has five subunits: alpha(3), beta(3), gamma(1), delta(1), epsilon(1). CF(0) has three main subunits: a(1), b(2) and c(9-12). The alpha and beta chains form an alternating ring which encloses part of the gamma chain. CF(1) is attached to CF(0) by a central stalk formed by the gamma and epsilon chains, while a peripheral stalk is formed by the delta and b chains.

The protein resides in the cell inner membrane. Key component of the proton channel; it plays a direct role in the translocation of protons across the membrane. The chain is ATP synthase subunit a from Shewanella sp. (strain MR-4).